A 184-amino-acid chain; its full sequence is Photosystem I assembly protein Ycf4 (184 aa).

2 consecutive transmembrane segments (helical) span residues 22–42 and 57–77; these read FCWA…GTSS and IIFF…LFIS.

This sequence belongs to the Ycf4 family.

It localises to the plastid. It is found in the chloroplast thylakoid membrane. Its function is as follows. Seems to be required for the assembly of the photosystem I complex. This Platanus occidentalis (Sycamore) protein is Photosystem I assembly protein Ycf4.